The following is a 1079-amino-acid chain: Spermatogenesis-associated protein 31G1 (1079 aa).

Disordered stretches follow at residues 97–145 (EVEE…GSEG), 261–281 (EDLEGMAPDPQLLPPPSSPSV), 297–317 (GVLSGAEAPTQSPGTSPLEVL), 331–362 (KMPQAFEPPMPPPCQSPASLSEPRKVSPEGGL), 376–412 (EKPQASESSMPVPCPPLDSLPELQRESSLEDPSRYKP), 506–566 (NLWA…SPPP), 637–678 (VPVF…EQRK), and 840–975 (PHSS…NHPA). The segment covering 98–113 (VEEEGEEEEEGEDEAS) has biased composition (acidic residues). The span at 336–345 (FEPPMPPPCQ) shows a compositional bias: pro residues. A compositionally biased stretch (basic and acidic residues) spans 398–412 (LQRESSLEDPSRYKP). Low complexity-rich tracts occupy residues 551–562 (NSSASRSPSLAL) and 645–655 (SSPSSNSVSKS). Residues 669 to 678 (PDGEAVEQRK) show a composition bias toward basic and acidic residues. Positions 942–951 (AKKREHPRKP) are enriched in basic residues.

Dispensable for normal development and fertility. The sequence is that of Spermatogenesis-associated protein 31G1 from Homo sapiens (Human).